Consider the following 497-residue polypeptide: Aluminum-activated malate transporter 10 (497 aa).

6 helical membrane-spanning segments follow: residues 66–86 (KVVHCLKVGLALSLVSIFYYM), 88–108 (PLYDGVGGNAMWAIMTVVVVF), 123–143 (VVATILAGSLGIAVHWVATQS), 148–168 (VFVIGCSVFLFAFAATYSRFV), 173–193 (ARFDYGAMIFILTFSLVSVGG), and 210–230 (IAIGTSICIIITVFFCPIWAG). Disordered regions lie at residues 413–437 (PIETNKPEEVPSEEENKVDSEERTT) and 476–497 (DFEQDSKKKTGDNNTKQPPLSS). The segment covering 417–436 (NKPEEVPSEEENKVDSEERT) has biased composition (basic and acidic residues). Positions 487 to 497 (DNNTKQPPLSS) are enriched in polar residues.

Belongs to the aromatic acid exporter (TC 2.A.85) family.

The protein localises to the membrane. In terms of biological role, malate transporter. This chain is Aluminum-activated malate transporter 10 (ALMT10), found in Arabidopsis thaliana (Mouse-ear cress).